Reading from the N-terminus, the 94-residue chain is Large ribosomal subunit protein eL43A (94 aa).

A C4-type zinc finger spans residues 39–62; it reads CPFCGRNTVKRTAAGIWCCNGKGC.

Belongs to the eukaryotic ribosomal protein eL43 family. In terms of assembly, component of the large ribosomal subunit (LSU). Mature yeast ribosomes consist of a small (40S) and a large (60S) subunit. The 40S small subunit contains 1 molecule of ribosomal RNA (18S rRNA) and at least 33 different proteins. The large 60S subunit contains 3 rRNA molecules (25S, 5.8S and 5S rRNA) and at least 46 different proteins.

The protein resides in the cytoplasm. In terms of biological role, component of the ribosome, a large ribonucleoprotein complex responsible for the synthesis of proteins in the cell. The small ribosomal subunit (SSU) binds messenger RNAs (mRNAs) and translates the encoded message by selecting cognate aminoacyl-transfer RNA (tRNA) molecules. The large subunit (LSU) contains the ribosomal catalytic site termed the peptidyl transferase center (PTC), which catalyzes the formation of peptide bonds, thereby polymerizing the amino acids delivered by tRNAs into a polypeptide chain. The nascent polypeptides leave the ribosome through a tunnel in the LSU and interact with protein factors that function in enzymatic processing, targeting, and the membrane insertion of nascent chains at the exit of the ribosomal tunnel. The protein is Large ribosomal subunit protein eL43A (rpl4301) of Schizosaccharomyces pombe (strain 972 / ATCC 24843) (Fission yeast).